The following is a 410-amino-acid chain: MLRFGVNQKTSLLLTALLSCGLLIFSPVSQSSDLNQIQKQIKQQESKIEKQKREQAKLQANLKKHESKINSVEGELLETEISLKEIRKQIADADKQLKQLEKQEREQKARLTKQIDIIYRSGINPSLIERMFAQDPTKAERMKVYYQHLNQVRIEMINNLKATQAQIAVQKKAILSQQKNHRNQLSTQKKQQQALQKAQQEHQSTLNELNKNLALDQDKLNTLKANEQALRQEIQRAEQAAREQEKREREALAQRQKAEEKRTSKPYQPTVQERQLLNSTSGLGAAKKQYSLPVSGSILHTFGSIQAGEVRWKGMVIGASAGTPVKAIAAGRVILAGYLNGYGYMVIVKHGETDLSLYGFNQAVSVKVGQLVSAGQVIAQVGNTGEISRSALYFGISRKGTPVNPAGWVR.

Positions 178-187 are enriched in polar residues; the sequence is QKNHRNQLST. 2 disordered regions span residues 178-203 and 236-272; these read QKNHRNQLSTQKKQQQALQKAQQEHQ and RAEQAAREQEKREREALAQRQKAEEKRTSKPYQPTVQ. Over residues 188-198 the composition is skewed to low complexity; sequence QKKQQQALQKA. Basic and acidic residues predominate over residues 236–263; it reads RAEQAAREQEKREREALAQRQKAEEKRT.

This is an uncharacterized protein from Haemophilus influenzae (strain ATCC 51907 / DSM 11121 / KW20 / Rd).